Reading from the N-terminus, the 277-residue chain is MSNKKQSNRLTEQHKLSQGVIGIFGDYAKAHDLAVGEVSKLVKKALSNEYPQLSFRYRDSIKKTEINEALKKIDPDLGGTLFVSNSSIKPDGGIVEVKDDYGEWRVVLVAEAKHQGKDIINIRNGLLVGKRGDQDLMAAGNAIERSHKNISEIANFMLSESHFPYVLFLEGSNFLTENISITRPDGRVVNLEYNSGILNRLDRLTAANYGMPINSNLCINKFVNHKDKSIMLQAASIYTQGDGREWDSKIMFEIMFDISTTSLRVLGRDLFEQLTSK.

Residues Asp-91, Glu-111, and Lys-113 contribute to the active site. 2 residues coordinate Mg(2+): Asp-91 and Glu-111.

The protein belongs to the EcoRI type II restriction endonuclease family. As to quaternary structure, homodimer. Mg(2+) is required as a cofactor.

The catalysed reaction is Endonucleolytic cleavage of DNA to give specific double-stranded fragments with terminal 5'-phosphates.. A P subtype restriction enzyme that recognizes the double-stranded sequence 5'-GAATTC-3' and cleaves after G-1. This is Type II restriction enzyme EcoRI (ecoRIR) from Escherichia coli.